A 163-amino-acid polypeptide reads, in one-letter code: uncharacterized protein (163 aa).

This is an uncharacterized protein from Homo sapiens (Human).